We begin with the raw amino-acid sequence, 483 residues long: Aspartyl/glutamyl-tRNA(Asn/Gln) amidotransferase subunit B (483 aa).

This sequence belongs to the GatB/GatE family. GatB subfamily. As to quaternary structure, heterotrimer of A, B and C subunits.

The catalysed reaction is L-glutamyl-tRNA(Gln) + L-glutamine + ATP + H2O = L-glutaminyl-tRNA(Gln) + L-glutamate + ADP + phosphate + H(+). It catalyses the reaction L-aspartyl-tRNA(Asn) + L-glutamine + ATP + H2O = L-asparaginyl-tRNA(Asn) + L-glutamate + ADP + phosphate + 2 H(+). Functionally, allows the formation of correctly charged Asn-tRNA(Asn) or Gln-tRNA(Gln) through the transamidation of misacylated Asp-tRNA(Asn) or Glu-tRNA(Gln) in organisms which lack either or both of asparaginyl-tRNA or glutaminyl-tRNA synthetases. The reaction takes place in the presence of glutamine and ATP through an activated phospho-Asp-tRNA(Asn) or phospho-Glu-tRNA(Gln). This is Aspartyl/glutamyl-tRNA(Asn/Gln) amidotransferase subunit B from Anaplasma phagocytophilum (strain HZ).